We begin with the raw amino-acid sequence, 595 residues long: Putative laccase-18 (595 aa).

Residues 1–29 (MEKLSTAASLFGVVVAATALAMAVVGGEA) form the signal peptide. Plastocyanin-like domains are found at residues 37–153 (MVHE…PRDG) and 162–316 (KDVP…YTGA). Residues N42 and N48 are each glycosylated (N-linked (GlcNAc...) asparagine). Positions 87 and 89 each coordinate Cu cation. N121 is a glycosylation site (N-linked (GlcNAc...) asparagine). Cu cation contacts are provided by H132 and H134. Residues N206, N345, N382, N402, N409, N439, and N470 are each glycosylated (N-linked (GlcNAc...) asparagine). One can recognise a Plastocyanin-like 3 domain in the interval 429-571 (DFPVRPPRPF…ATAFIVEDGP (143 aa)). Cu cation contacts are provided by N488, H491, H493, H550, C551, H552, H556, and M561. The tract at residues 570 to 595 (GPTPETSLPPPPPEFKRCGTNGLSQP) is disordered.

This sequence belongs to the multicopper oxidase family. Cu cation is required as a cofactor.

It localises to the secreted. The protein localises to the extracellular space. Its subcellular location is the apoplast. The enzyme catalyses 4 hydroquinone + O2 = 4 benzosemiquinone + 2 H2O. Its function is as follows. Lignin degradation and detoxification of lignin-derived products. This Oryza sativa subsp. indica (Rice) protein is Putative laccase-18 (LAC18).